Consider the following 437-residue polypeptide: GTPase Der (437 aa).

2 EngA-type G domains span residues 4–167 (PIVA…PDNA) and 175–352 (IHFS…QHHR). Residues 10–17 (GRPNVGKS), 57–61 (DTGGI), 119–122 (NKVD), 181–188 (GRPNVGKS), 229–233 (DTAGI), and 294–297 (NKWD) each bind GTP. The KH-like domain occupies 353 to 437 (QRIQSAVLND…PIHLIKRQRQ (85 aa)).

Belongs to the TRAFAC class TrmE-Era-EngA-EngB-Septin-like GTPase superfamily. EngA (Der) GTPase family. Associates with the 50S ribosomal subunit.

Functionally, GTPase that plays an essential role in the late steps of ribosome biogenesis. This Limosilactobacillus reuteri (strain DSM 20016) (Lactobacillus reuteri) protein is GTPase Der.